Reading from the N-terminus, the 153-residue chain is Transcriptional repressor NrdR (153 aa).

A zinc finger spans residues 3–33 (CPYCNYKESKVIDSRHTDLKSIRRRRECESC). The region spanning 48–138 (LMVIKKDNSR…VYRQFKDINT (91 aa)) is the ATP-cone domain.

Belongs to the NrdR family. Zn(2+) serves as cofactor.

In terms of biological role, negatively regulates transcription of bacterial ribonucleotide reductase nrd genes and operons by binding to NrdR-boxes. The sequence is that of Transcriptional repressor NrdR from Clostridioides difficile (strain 630) (Peptoclostridium difficile).